Here is a 154-residue protein sequence, read N- to C-terminus: Transcription antitermination protein NusB (154 aa).

This sequence belongs to the NusB family.

Its function is as follows. Involved in transcription antitermination. Required for transcription of ribosomal RNA (rRNA) genes. Binds specifically to the boxA antiterminator sequence of the ribosomal RNA (rrn) operons. The sequence is that of Transcription antitermination protein NusB from Oleidesulfovibrio alaskensis (strain ATCC BAA-1058 / DSM 17464 / G20) (Desulfovibrio alaskensis).